Reading from the N-terminus, the 142-residue chain is Protein archease (142 aa).

3 residues coordinate Ca(2+): Asp-12, Asp-141, and Leu-142.

This sequence belongs to the archease family.

Functionally, activates the tRNA-splicing ligase complex by facilitating the enzymatic turnover of catalytic subunit RtcB. Acts by promoting the guanylylation of RtcB, a key intermediate step in tRNA ligation. Can also alter the NTP specificity of RtcB such that ATP, dGTP or ITP is used efficiently. In Thermococcus gammatolerans (strain DSM 15229 / JCM 11827 / EJ3), this protein is Protein archease.